Here is a 291-residue protein sequence, read N- to C-terminus: Heterogeneous nuclear ribonucleoprotein D-like-B (291 aa).

RRM domains are found at residues 34 to 116 (SKMF…QGKE) and 119 to 196 (KKVF…AAQP). The segment at 196–226 (PKEVYRQQQQKQQKGGRGGTRGRGRGQGYSN) is disordered. Residues 210–222 (GGRGGTRGRGRGQ) show a composition bias toward gly residues.

The protein resides in the nucleus. It localises to the cytoplasm. In terms of biological role, acts as a transcriptional regulator. Binds DNA and RNA. This Xenopus laevis (African clawed frog) protein is Heterogeneous nuclear ribonucleoprotein D-like-B (hnrnpdl-b).